The chain runs to 154 residues: Protein SprT-like (154 aa).

The SprT-like domain occupies 6–144 (LQQLTETISL…CGTCHGKLKF (139 aa)). Histidine 67 provides a ligand contact to Zn(2+). Residue glutamate 68 is part of the active site. Histidine 71 is a binding site for Zn(2+).

It belongs to the SprT family. Zn(2+) is required as a cofactor.

The protein resides in the cytoplasm. The polypeptide is Protein SprT-like (Shouchella clausii (strain KSM-K16) (Alkalihalobacillus clausii)).